The sequence spans 903 residues: Dynamin-like GTPase msp1, mitochondrial (903 aa).

The N-terminal 78 residues, 1–78, are a transit peptide targeting the mitochondrion; the sequence is MGISWFLSRF…RFFSFSSISR (78 aa). A helical transmembrane segment spans residues 86-103; that stretch reads LPVAGFSLVAGGAAYIGA. Over residues 167 to 188 the composition is skewed to basic and acidic residues; sequence VLQAERAKEHRSNSNDKQKSSD. Residues 167–198 form a disordered region; that stretch reads VLQAERAKEHRSNSNDKQKSSDNDEDPNDTTV. Residues 198–214 traverse the membrane as a helical segment; it reads VGIGAALAASILSVDSV. The Dynamin-type G domain maps to 260–531; it reads AVTLPSIVVI…LEYTMSKNLQ (272 aa). Residues 270-277 are G1 motif; it reads GSQSSGKS. The GTP site is built by S273, S274, G275, K276, S277, S278, and G292. S277 contacts Mg(2+). The segment at 296-298 is G2 motif; that stretch reads VTR. 2 residues coordinate Mg(2+): T297 and D370. A G3 motif region spans residues 370–373; sequence DLPG. The interval 438–441 is G4 motif; sequence TKMD. GTP contacts are provided by K439, D441, and S468. A G5 motif region spans residues 467 to 470; it reads ISRI. Residues 691–805 form a paddle region region; the sequence is ATSEQVENCV…VLKSRACKHK (115 aa). A disulfide bond links C802 and C811. A GED domain is found at 805–898; it reads KEAKYTCPEI…KINSLVILEQ (94 aa).

The protein belongs to the TRAFAC class dynamin-like GTPase superfamily. Dynamin/Fzo/YdjA family. In terms of assembly, homooligomer. Interacts with cdr1. Post-translationally, cleavage of the transit peptide by mitochondrial processing protease (MPP) produces a long integral membrane form of msp1 (l-msp1). Further processing by a rhomboid protease after the transmembrane regions produces a short peripheral membrane form of msp1 (s-msp1). Both isoforms are required for full activity.

The protein localises to the mitochondrion inner membrane. It localises to the mitochondrion intermembrane space. It carries out the reaction GTP + H2O = GDP + phosphate + H(+). Functionally, dynamin-related GTPase that is essential for normal mitochondrial morphology by mediating fusion of the mitochondrial inner membranes and maintaining respiratory chain function. Exists in two forms: the transmembrane, long form (Dynamin-like GTPase msp1, long form; l-msp1), which is tethered to the inner mitochondrial membrane, and the short soluble form (Dynamin-like GTPase msp1, short form; s-msp1), which results from proteolytic cleavage and localizes in the intermembrane space. Both forms (l-msp1 and s-msp1) cooperate to catalyze the fusion of the mitochondrial inner membrane. Its role in mitochondrial morphology is required for mitochondrial genome maintenance. In terms of biological role, constitutes the transmembrane long form (l-msp1) that plays a central role in mitochondrial inner membrane fusion. L-msp1 and the soluble short form (s-msp1) form higher-order helical assemblies that coordinate the fusion of mitochondrial inner membranes. Inner membrane-anchored l-msp1 molecules initiate membrane remodeling by recruiting soluble s-msp1 to rapidly polymerize into a flexible cylindrical scaffold encaging the mitochondrial inner membrane. Once at the membrane surface, the formation of s-msp1 helices induce bilayer curvature. Msp1 dimerization through the paddle region, which inserts into cardiolipin-containing membrane, promotes GTP hydrolysis and the helical assembly of a flexible msp1 lattice on the membrane, which drives membrane curvature and mitochondrial fusion. Its function is as follows. Constitutes the soluble short form (s-msp1) generated by cleavage, which plays a central role in mitochondrial inner membrane fusion. The transmembrane long form (l-msp1) and the s-msp1 form higher-order helical assemblies that coordinate the fusion of mitochondrial inner membranes. Inner membrane-anchored l-msp1 molecules initiate membrane remodeling by recruiting soluble s-msp1 to rapidly polymerize into a flexible cylindrical scaffold encaging the mitochondrial inner membrane. Once at the membrane surface, the formation of s-msp1 helices induce bilayer curvature. Msp1 dimerization through the paddle region, which inserts into cardiolipin-containing membrane, promotes GTP hydrolysis and the helical assembly of a flexible msp1 lattice on the membrane, which drives membrane curvature and mitochondrial fusion. In Schizosaccharomyces pombe (strain 972 / ATCC 24843) (Fission yeast), this protein is Dynamin-like GTPase msp1, mitochondrial.